We begin with the raw amino-acid sequence, 180 residues long: Oligoribonuclease (180 aa).

The Exonuclease domain maps to 7–170 (LIWIDLEMTG…DDIRESLAEL (164 aa)). Residue Tyr-128 is part of the active site.

The protein belongs to the oligoribonuclease family.

It is found in the cytoplasm. 3'-to-5' exoribonuclease specific for small oligoribonucleotides. The protein is Oligoribonuclease of Pectobacterium atrosepticum (strain SCRI 1043 / ATCC BAA-672) (Erwinia carotovora subsp. atroseptica).